A 103-amino-acid chain; its full sequence is Pyrimidine/purine nucleoside phosphorylase (103 aa).

This sequence belongs to the nucleoside phosphorylase PpnP family.

It catalyses the reaction a purine D-ribonucleoside + phosphate = a purine nucleobase + alpha-D-ribose 1-phosphate. It carries out the reaction adenosine + phosphate = alpha-D-ribose 1-phosphate + adenine. The enzyme catalyses cytidine + phosphate = cytosine + alpha-D-ribose 1-phosphate. The catalysed reaction is guanosine + phosphate = alpha-D-ribose 1-phosphate + guanine. It catalyses the reaction inosine + phosphate = alpha-D-ribose 1-phosphate + hypoxanthine. It carries out the reaction thymidine + phosphate = 2-deoxy-alpha-D-ribose 1-phosphate + thymine. The enzyme catalyses uridine + phosphate = alpha-D-ribose 1-phosphate + uracil. The catalysed reaction is xanthosine + phosphate = alpha-D-ribose 1-phosphate + xanthine. Functionally, catalyzes the phosphorolysis of diverse nucleosides, yielding D-ribose 1-phosphate and the respective free bases. Can use uridine, adenosine, guanosine, cytidine, thymidine, inosine and xanthosine as substrates. Also catalyzes the reverse reactions. The polypeptide is Pyrimidine/purine nucleoside phosphorylase (Citrifermentans bemidjiense (strain ATCC BAA-1014 / DSM 16622 / JCM 12645 / Bem) (Geobacter bemidjiensis)).